The primary structure comprises 930 residues: Translation initiation factor IF-2 (930 aa).

Residues 50–67 (FKPAAAPKVEAKPAAPKV) show a composition bias toward low complexity. Disordered regions lie at residues 50-195 (FKPA…PRID) and 260-346 (EVVP…HELP). Basic and acidic residues-rich tracts occupy residues 68 to 90 (SAEK…EAKP) and 110 to 125 (FKAE…AERR). Positions 129–141 (KGNNRDQQQNGNR) are enriched in low complexity. 2 stretches are compositionally biased toward basic and acidic residues: residues 157–167 (RDNRRFNDQAK) and 262–295 (VPEK…DGPR). Residues 309-318 (NQKNSNWNNN) are compositionally biased toward low complexity. The span at 337–346 (VTERKFHELP) shows a compositional bias: basic and acidic residues. One can recognise a tr-type G domain in the interval 432–599 (ERPPVVTIMG…TVLLVAEIQE (168 aa)). A G1 region spans residues 441–448 (GHVDHGKT). 441–448 (GHVDHGKT) provides a ligand contact to GTP. A G2 region spans residues 466–470 (GITQH). A G3 region spans residues 487–490 (DTPG). GTP contacts are provided by residues 487 to 491 (DTPGH) and 541 to 544 (NKID). The G4 stretch occupies residues 541-544 (NKID). A G5 region spans residues 577–579 (SAK).

This sequence belongs to the TRAFAC class translation factor GTPase superfamily. Classic translation factor GTPase family. IF-2 subfamily.

The protein localises to the cytoplasm. Its function is as follows. One of the essential components for the initiation of protein synthesis. Protects formylmethionyl-tRNA from spontaneous hydrolysis and promotes its binding to the 30S ribosomal subunits. Also involved in the hydrolysis of GTP during the formation of the 70S ribosomal complex. This is Translation initiation factor IF-2 from Streptococcus pneumoniae (strain ATCC BAA-255 / R6).